The primary structure comprises 66 residues: Prophage transcriptional regulatory protein (66 aa).

The protein is Prophage transcriptional regulatory protein (croE) of Escherichia coli (strain K12).